The chain runs to 819 residues: Nuclear pore complex protein Nup93 (819 aa).

Threonine 49 bears the Phosphothreonine mark. Residues serine 52, serine 66, serine 72, serine 75, serine 80, serine 430, and serine 767 each carry the phosphoserine modification.

The protein belongs to the nucleoporin interacting component (NIC) family. As to quaternary structure, part of the nuclear pore complex (NPC). Component of the p62 complex, a complex composed of NUP62 and NUP54. Forms a complex with NUP35, NUP155, NUP205 and lamin B; the interaction with NUP35 is direct. Does not interact with TPR. Interacts with SMAD4 and IPO7; translocates SMAD4 to the nucleus through the NPC upon BMP7 stimulation resulting in activation of SMAD4 signaling.

It localises to the nucleus membrane. Its subcellular location is the nucleus. The protein resides in the nuclear pore complex. The protein localises to the nucleus envelope. Functionally, plays a role in the nuclear pore complex (NPC) assembly and/or maintenance. May anchor nucleoporins, but not NUP153 and TPR, to the NPC. During renal development, regulates podocyte migration and proliferation through SMAD4 signaling. In Bos taurus (Bovine), this protein is Nuclear pore complex protein Nup93 (NUP93).